Consider the following 132-residue polypeptide: Holo-[acyl-carrier-protein] synthase (132 aa).

Mg(2+)-binding residues include Asp13 and Glu63.

The protein belongs to the P-Pant transferase superfamily. AcpS family. It depends on Mg(2+) as a cofactor.

The protein resides in the cytoplasm. It catalyses the reaction apo-[ACP] + CoA = holo-[ACP] + adenosine 3',5'-bisphosphate + H(+). Transfers the 4'-phosphopantetheine moiety from coenzyme A to a Ser of acyl-carrier-protein. The sequence is that of Holo-[acyl-carrier-protein] synthase from Gloeobacter violaceus (strain ATCC 29082 / PCC 7421).